A 734-amino-acid chain; its full sequence is Photosystem I P700 chlorophyll a apoprotein A2 (734 aa).

Transmembrane regions (helical) follow at residues 46–69, 135–158, 175–199, 273–291, 330–353, 369–395, 417–439, and 517–535; these read IFAS…FHVA, LYTG…LHLQ, LNHH…HVAI, IAHH…GHMY, IHFQ…QHMY, AALY…IFFI, AIIS…LYVH, and FLVH…LILV. [4Fe-4S] cluster is bound by residues Cys559 and Cys568. A run of 2 helical transmembrane segments spans residues 575-596 and 643-665; these read AFYL…YWHW and LSVW…MFLI. Positions 654, 662, and 670 each coordinate chlorophyll a. Residue Trp671 participates in phylloquinone binding. The chain crosses the membrane as a helical span at residues 707–727; it reads LVGLAHFSVGYIFTYAAFLIA.

Belongs to the PsaA/PsaB family. As to quaternary structure, the PsaA/B heterodimer binds the P700 chlorophyll special pair and subsequent electron acceptors. PSI consists of a core antenna complex that captures photons, and an electron transfer chain that converts photonic excitation into a charge separation. The eukaryotic PSI reaction center is composed of at least 11 subunits. It depends on P700 is a chlorophyll a/chlorophyll a' dimer, A0 is one or more chlorophyll a, A1 is one or both phylloquinones and FX is a shared 4Fe-4S iron-sulfur center. as a cofactor.

It is found in the plastid. The protein resides in the chloroplast thylakoid membrane. It carries out the reaction reduced [plastocyanin] + hnu + oxidized [2Fe-2S]-[ferredoxin] = oxidized [plastocyanin] + reduced [2Fe-2S]-[ferredoxin]. In terms of biological role, psaA and PsaB bind P700, the primary electron donor of photosystem I (PSI), as well as the electron acceptors A0, A1 and FX. PSI is a plastocyanin-ferredoxin oxidoreductase, converting photonic excitation into a charge separation, which transfers an electron from the donor P700 chlorophyll pair to the spectroscopically characterized acceptors A0, A1, FX, FA and FB in turn. Oxidized P700 is reduced on the lumenal side of the thylakoid membrane by plastocyanin. The polypeptide is Photosystem I P700 chlorophyll a apoprotein A2 (Aethionema cordifolium (Lebanon stonecress)).